The chain runs to 364 residues: S-adenosylmethionine:tRNA ribosyltransferase-isomerase (364 aa).

It belongs to the QueA family. As to quaternary structure, monomer.

Its subcellular location is the cytoplasm. It carries out the reaction 7-aminomethyl-7-carbaguanosine(34) in tRNA + S-adenosyl-L-methionine = epoxyqueuosine(34) in tRNA + adenine + L-methionine + 2 H(+). The protein operates within tRNA modification; tRNA-queuosine biosynthesis. Functionally, transfers and isomerizes the ribose moiety from AdoMet to the 7-aminomethyl group of 7-deazaguanine (preQ1-tRNA) to give epoxyqueuosine (oQ-tRNA). This chain is S-adenosylmethionine:tRNA ribosyltransferase-isomerase, found in Bradyrhizobium sp. (strain ORS 278).